A 223-amino-acid chain; its full sequence is F420-dependent NADP reductase (223 aa).

NADP(+)-binding positions include 9–12, 30–31, Lys-35, Leu-75, and Val-101; these read TGDQ and SR.

It belongs to the F420-dependent NADP reductase family.

It catalyses the reaction reduced coenzyme F420-(gamma-L-Glu)(n) + NADP(+) = oxidized coenzyme F420-(gamma-L-Glu)(n) + NADPH + 2 H(+). Its function is as follows. Catalyzes the reduction of NADP(+) with F420H(2) via hydride transfer, and the reverse reaction, i.e. the reduction of F420 with NADPH. Probably functions in the regeneration of NADPH required in biosynthetic reactions. The sequence is that of F420-dependent NADP reductase (fno) from Methanocaldococcus jannaschii (strain ATCC 43067 / DSM 2661 / JAL-1 / JCM 10045 / NBRC 100440) (Methanococcus jannaschii).